The primary structure comprises 155 residues: Vasotocin-neurophysin VT 1 (155 aa).

The N-terminal stretch at 1 to 20 (MPDSTIPLLCVLGLLALSSA) is a signal peptide. The cysteines at positions 21 and 26 are disulfide-linked. A Glycine amide modification is found at Gly29. Intrachain disulfides connect Cys41-Cys85, Cys44-Cys58, Cys52-Cys75, Cys59-Cys65, Cys92-Cys105, Cys99-Cys117, and Cys106-Cys111.

Belongs to the vasopressin/oxytocin family. Post-translationally, seven disulfide bonds are present in neurophysin.

The protein localises to the secreted. Functionally, vasotocin is probably an antidiuretic hormone. This Oncorhynchus masou (Cherry salmon) protein is Vasotocin-neurophysin VT 1.